A 369-amino-acid chain; its full sequence is MKENNNAEILELKKQFTALQQKCGAKTDTIVRLGQDLEKSENEKKGLAARVETLERNLERSERELQLVCACQNDMKIKFGTERQDLIEDIEKYKRENQQLRTDRQELLDQKADLKKDCKTFRQTIAQFEVEKMGGPVRNSFSTENDEVSKLEAHEKLQAKCKGLESDLRSMLGIKEELLMERDEMQRKVARLSNELSYLLNGDPRRVAEDLDSLVAENRFLKAKLNTAEEESESIKMTLAKYKQMAEAVNVQTMVNRSPKAGEGDDKPSVAVINMKQIRELLASHAIELVESDYRAITTILLDLCNDKQMALAHSRRANKVLGMRLHEVESKLAVLDIKSRSSSPRHELPRDEDIELVVPKAVASTSSK.

A coiled-coil region spans residues 1–249; that stretch reads MKENNNAEIL…AKYKQMAEAV (249 aa).

The protein belongs to the CCDC149 family. Expressed in amphid and phasmid ciliated neurons, and also pharyngeal, touch receptor and motor neurons.

The protein localises to the cell projection. It is found in the cilium. The polypeptide is Coiled-coil domain-containing protein 149 (Caenorhabditis elegans).